The following is a 377-amino-acid chain: Pseudouridylate synthase RPUSD4, mitochondrial (377 aa).

Residues 1 to 35 (MAAPLLGSPGLQVLSMSSRTGKLFTPSSRSFCSRA) constitute a mitochondrion transit peptide. Residue Asp153 is part of the active site.

The protein belongs to the pseudouridine synthase RluA family. As to quaternary structure, interacts with 16S mt-rRNA, mt-tRNA(Phe) and mt-tRNA(Met). Forms a regulatory protein-RNA complex, consisting of RCC1L, NGRN, RPUSD3, RPUSD4, TRUB2, FASTKD2 and 16S mt-rRNA.

It is found in the mitochondrion matrix. Its subcellular location is the nucleus. The protein localises to the cytoplasm. It catalyses the reaction uridine in 5S rRNA = pseudouridine in 5S rRNA. It carries out the reaction a uridine in tRNA = a pseudouridine in tRNA. The enzyme catalyses a uridine in mRNA = a pseudouridine in mRNA. Functionally, catalyzes uridine to pseudouridine isomerization (pseudouridylation) of different mitochondrial RNA substrates. Acts on position 1397 in 16S mitochondrial ribosomal RNA (16S mt-rRNA). This modification is required for the assembly of 16S mt-rRNA into a functional mitochondrial ribosome. As a component of a functional protein-RNA module, consisting of RCC1L, NGRN, RPUSD3, RPUSD4, TRUB2, FASTKD2 and 16S mt-rRNA, controls 16S mt-rRNA abundance and is required for intra-mitochondrial translation. Acts on position 39 in mitochondrial tRNA(Phe). Also catalyzes pseudouridylation of mRNAs in nucleus: acts as a regulator of pre-mRNA splicing by mediating pseudouridylation of pre-mRNAs at locations associated with alternatively spliced regions. Pseudouridylation of pre-mRNAs near splice sites directly regulates mRNA splicing and mRNA 3'-end processing. This is Pseudouridylate synthase RPUSD4, mitochondrial from Rattus norvegicus (Rat).